The chain runs to 486 residues: Siroheme synthase (486 aa).

A precorrin-2 dehydrogenase /sirohydrochlorin ferrochelatase region spans residues 1–204; that stretch reads MNYLPIFVDL…HQIEQAEALV (204 aa). NAD(+) contacts are provided by residues 22 to 23 and 43 to 44; these read HI and EK. The residue at position 128 (S128) is a Phosphoserine. The tract at residues 216–486 is uroporphyrinogen-III C-methyltransferase; the sequence is GEVSLVGAGP…NKETHWKQAA (271 aa). P225 lines the S-adenosyl-L-methionine pocket. Residue D248 is the Proton acceptor of the active site. The active-site Proton donor is K270. S-adenosyl-L-methionine is bound by residues 301–303, V306, 331–332, M383, and G412; these read GGD and TA.

It in the N-terminal section; belongs to the precorrin-2 dehydrogenase / sirohydrochlorin ferrochelatase family. This sequence in the C-terminal section; belongs to the precorrin methyltransferase family.

It carries out the reaction uroporphyrinogen III + 2 S-adenosyl-L-methionine = precorrin-2 + 2 S-adenosyl-L-homocysteine + H(+). It catalyses the reaction precorrin-2 + NAD(+) = sirohydrochlorin + NADH + 2 H(+). The catalysed reaction is siroheme + 2 H(+) = sirohydrochlorin + Fe(2+). The protein operates within cofactor biosynthesis; adenosylcobalamin biosynthesis; precorrin-2 from uroporphyrinogen III: step 1/1. It participates in cofactor biosynthesis; adenosylcobalamin biosynthesis; sirohydrochlorin from precorrin-2: step 1/1. It functions in the pathway porphyrin-containing compound metabolism; siroheme biosynthesis; precorrin-2 from uroporphyrinogen III: step 1/1. Its pathway is porphyrin-containing compound metabolism; siroheme biosynthesis; siroheme from sirohydrochlorin: step 1/1. The protein operates within porphyrin-containing compound metabolism; siroheme biosynthesis; sirohydrochlorin from precorrin-2: step 1/1. Its function is as follows. Multifunctional enzyme that catalyzes the SAM-dependent methylations of uroporphyrinogen III at position C-2 and C-7 to form precorrin-2 via precorrin-1. Then it catalyzes the NAD-dependent ring dehydrogenation of precorrin-2 to yield sirohydrochlorin. Finally, it catalyzes the ferrochelation of sirohydrochlorin to yield siroheme. The protein is Siroheme synthase of Actinobacillus pleuropneumoniae serotype 3 (strain JL03).